We begin with the raw amino-acid sequence, 425 residues long: tRNA(Ile)-lysidine synthase (425 aa).

37 to 42 (SGGKDS) lines the ATP pocket.

The protein belongs to the tRNA(Ile)-lysidine synthase family.

It localises to the cytoplasm. The catalysed reaction is cytidine(34) in tRNA(Ile2) + L-lysine + ATP = lysidine(34) in tRNA(Ile2) + AMP + diphosphate + H(+). Its function is as follows. Ligates lysine onto the cytidine present at position 34 of the AUA codon-specific tRNA(Ile) that contains the anticodon CAU, in an ATP-dependent manner. Cytidine is converted to lysidine, thus changing the amino acid specificity of the tRNA from methionine to isoleucine. The polypeptide is tRNA(Ile)-lysidine synthase (Leptospira borgpetersenii serovar Hardjo-bovis (strain JB197)).